The sequence spans 441 residues: Alpha-methylserine aldolase (441 aa).

Lys-256 is subject to N6-(pyridoxal phosphate)lysine.

It belongs to the SHMT family. Alpha-methylserine aldolase subfamily. In terms of assembly, homodimer. Requires pyridoxal 5'-phosphate as cofactor.

The enzyme catalyses 2-methyl-L-serine = formaldehyde + L-alanine. Catalyzes the reversible interconversion of alpha-methyl-L-serine to L-alanine and formaldehyde. In Variovorax paradoxus, this protein is Alpha-methylserine aldolase.